Consider the following 215-residue polypeptide: Cytochrome b6 (215 aa).

A helical transmembrane segment spans residues 32–52 (IFYCLGGITLTCFLVQVATGF). A heme c-binding site is contributed by Cys35. Residues His86 and His100 each contribute to the heme b site. Helical transmembrane passes span 90-110 (ASMMVLMMILHVFRVYLTGGF), 116-136 (LTWVTGVVLGVLTASFGVTGY), and 186-206 (LHTFVLPLLTAVFMLMHFLMI). Positions 187 and 202 each coordinate heme b.

It belongs to the cytochrome b family. PetB subfamily. In terms of assembly, the 4 large subunits of the cytochrome b6-f complex are cytochrome b6, subunit IV (17 kDa polypeptide, PetD), cytochrome f and the Rieske protein, while the 4 small subunits are PetG, PetL, PetM and PetN. The complex functions as a dimer. Requires heme b as cofactor. It depends on heme c as a cofactor.

It localises to the plastid. The protein resides in the chloroplast thylakoid membrane. Its function is as follows. Component of the cytochrome b6-f complex, which mediates electron transfer between photosystem II (PSII) and photosystem I (PSI), cyclic electron flow around PSI, and state transitions. In Arabidopsis thaliana (Mouse-ear cress), this protein is Cytochrome b6.